The sequence spans 267 residues: UPF0246 protein Dshi_3333 (267 aa).

It belongs to the UPF0246 family.

This is UPF0246 protein Dshi_3333 from Dinoroseobacter shibae (strain DSM 16493 / NCIMB 14021 / DFL 12).